Reading from the N-terminus, the 428-residue chain is Enolase (428 aa).

Glutamine 163 is a binding site for (2R)-2-phosphoglycerate. Glutamate 205 (proton donor) is an active-site residue. Residues aspartate 242, glutamate 285, and aspartate 312 each coordinate Mg(2+). (2R)-2-phosphoglycerate is bound by residues lysine 337, arginine 366, serine 367, and lysine 388. Residue lysine 337 is the Proton acceptor of the active site.

The protein belongs to the enolase family. It depends on Mg(2+) as a cofactor.

It localises to the cytoplasm. The protein resides in the secreted. The protein localises to the cell surface. The catalysed reaction is (2R)-2-phosphoglycerate = phosphoenolpyruvate + H2O. It functions in the pathway carbohydrate degradation; glycolysis; pyruvate from D-glyceraldehyde 3-phosphate: step 4/5. In terms of biological role, catalyzes the reversible conversion of 2-phosphoglycerate (2-PG) into phosphoenolpyruvate (PEP). It is essential for the degradation of carbohydrates via glycolysis. This chain is Enolase, found in Neisseria meningitidis serogroup C (strain 053442).